We begin with the raw amino-acid sequence, 181 residues long: Large ribosomal subunit protein uL16 (181 aa).

The protein belongs to the universal ribosomal protein uL16 family. As to quaternary structure, part of the 50S ribosomal subunit.

The chain is Large ribosomal subunit protein uL16 from Pyrococcus furiosus (strain ATCC 43587 / DSM 3638 / JCM 8422 / Vc1).